The chain runs to 432 residues: Glutamate-1-semialdehyde 2,1-aminomutase 1 (432 aa).

K268 is modified (N6-(pyridoxal phosphate)lysine).

The protein belongs to the class-III pyridoxal-phosphate-dependent aminotransferase family. HemL subfamily. Homodimer. Pyridoxal 5'-phosphate is required as a cofactor.

The protein resides in the cytoplasm. The enzyme catalyses (S)-4-amino-5-oxopentanoate = 5-aminolevulinate. It functions in the pathway porphyrin-containing compound metabolism; protoporphyrin-IX biosynthesis; 5-aminolevulinate from L-glutamyl-tRNA(Glu): step 2/2. The sequence is that of Glutamate-1-semialdehyde 2,1-aminomutase 1 from Bacillus mycoides (strain KBAB4) (Bacillus weihenstephanensis).